Reading from the N-terminus, the 670-residue chain is Auxin response factor 16 (670 aa).

The segment at residues 120 to 222 (FAKTLTQSDA…DLCVGIRRAK (103 aa)) is a DNA-binding region (TF-B3). Residues 545–557 (KTQISSGGSNQNG) are compositionally biased toward polar residues. A disordered region spans residues 545–579 (KTQISSGGSNQNGVAGREFSSSDEGSPCSKKVHDA). One can recognise a PB1 domain in the interval 584-664 (TGHCKVFMES…RRLTILTEQG (81 aa)).

This sequence belongs to the ARF family. In terms of assembly, homodimers and heterodimers.

The protein localises to the nucleus. Auxin response factors (ARFs) are transcriptional factors that bind specifically to the DNA sequence 5'-TGTCTC-3' found in the auxin-responsive promoter elements (AuxREs). Could act as transcriptional activator or repressor. Formation of heterodimers with Aux/IAA proteins may alter their ability to modulate early auxin response genes expression. This chain is Auxin response factor 16 (ARF16), found in Arabidopsis thaliana (Mouse-ear cress).